The primary structure comprises 328 residues: GTP 3',8-cyclase (328 aa).

The Radical SAM core domain occupies 1–229; sequence MNQVDYLRIS…ESQVRGAGPA (229 aa). R8 provides a ligand contact to GTP. Positions 15 and 19 each coordinate [4Fe-4S] cluster. An S-adenosyl-L-methionine-binding site is contributed by Y21. C22 is a binding site for [4Fe-4S] cluster. Residue R60 coordinates GTP. G64 is an S-adenosyl-L-methionine binding site. T91 provides a ligand contact to GTP. S115 provides a ligand contact to S-adenosyl-L-methionine. K155 is a binding site for GTP. Residue M189 coordinates S-adenosyl-L-methionine. 2 residues coordinate [4Fe-4S] cluster: C252 and C255. 257–259 serves as a coordination point for GTP; sequence RMR. C269 contributes to the [4Fe-4S] cluster binding site.

The protein belongs to the radical SAM superfamily. MoaA family. As to quaternary structure, monomer and homodimer. It depends on [4Fe-4S] cluster as a cofactor.

The catalysed reaction is GTP + AH2 + S-adenosyl-L-methionine = (8S)-3',8-cyclo-7,8-dihydroguanosine 5'-triphosphate + 5'-deoxyadenosine + L-methionine + A + H(+). It participates in cofactor biosynthesis; molybdopterin biosynthesis. Its function is as follows. Catalyzes the cyclization of GTP to (8S)-3',8-cyclo-7,8-dihydroguanosine 5'-triphosphate. This is GTP 3',8-cyclase from Nostoc punctiforme (strain ATCC 29133 / PCC 73102).